The chain runs to 418 residues: Histidine--tRNA ligase (418 aa).

This sequence belongs to the class-II aminoacyl-tRNA synthetase family. Homodimer.

The protein localises to the cytoplasm. It carries out the reaction tRNA(His) + L-histidine + ATP = L-histidyl-tRNA(His) + AMP + diphosphate + H(+). This is Histidine--tRNA ligase from Dehalococcoides mccartyi (strain ATCC BAA-2100 / JCM 16839 / KCTC 5957 / BAV1).